The chain runs to 349 residues: 4-hydroxy-2-oxovalerate aldolase 2 (349 aa).

Positions 12–264 (VRMTDTSLRD…KTGIDFFDIA (253 aa)) constitute a Pyruvate carboxyltransferase domain. 20–21 (RD) contributes to the substrate binding site. A Mn(2+)-binding site is contributed by Asp21. His24 acts as the Proton acceptor in catalysis. Residues Ser174 and His203 each coordinate substrate. Residues His203 and His205 each coordinate Mn(2+). Substrate is bound at residue Tyr294.

This sequence belongs to the 4-hydroxy-2-oxovalerate aldolase family.

The catalysed reaction is (S)-4-hydroxy-2-oxopentanoate = acetaldehyde + pyruvate. The sequence is that of 4-hydroxy-2-oxovalerate aldolase 2 (bphI-2) from Mycolicibacterium smegmatis (strain ATCC 700084 / mc(2)155) (Mycobacterium smegmatis).